A 334-amino-acid chain; its full sequence is Cytochrome c biogenesis protein CcsA (334 aa).

8 helical membrane-spanning segments follow: residues 12-32 (NTAFLVLLLTMFAYWVAVVFP), 35-55 (WLVQGASGAMAIANLTITALL), 67-87 (ISNLYESLFFLAWGITAVHFI), 96-116 (FVGAVTSPIALGIVAFAALTL), 141-161 (VMMVSYATLMVGSLLAIAFLF), 242-262 (IIGLGFPLLTIGIIAGAVWAN), 277-297 (WALITWLVFAAYLHARITKGW), and 303-323 (AILAASGFTVVWICYLGVNLL).

This sequence belongs to the CcmF/CycK/Ccl1/NrfE/CcsA family. May interact with ccs1.

It is found in the cellular thylakoid membrane. Functionally, required during biogenesis of c-type cytochromes (cytochrome c6 and cytochrome f) at the step of heme attachment. This is Cytochrome c biogenesis protein CcsA from Synechocystis sp. (strain ATCC 27184 / PCC 6803 / Kazusa).